The sequence spans 401 residues: Type 3 secretion system translocon protein SctE (401 aa).

Residues 129–160 (IQRLHEQNMKKIEENQEKIKETEENAKQVKKS) are a coiled coil. 2 helical membrane passes run 176–196 (VIVGAIMVASGVGAVAGAMMV) and 224–244 (ILGPILTAIEVALTVVSTVMT). Residues 345–379 (LALNKADMAALQSIIDRLKEELSHLSESHQQVMEL) are a coiled coil.

This sequence belongs to the SctE/SipB/YopB family. In terms of assembly, the core secretion machinery of the T3SS is composed of approximately 20 different proteins, including cytoplasmic components, a base, an export apparatus and a needle. This subunit is involved in the formation of a pore, called the translocon, in host membrane. Interacts with YopD/SctB. Together with YopD/SctB, forms a multimeric integral membrane complex.

Its subcellular location is the secreted. The protein localises to the host membrane. Its function is as follows. Component of the type III secretion system (T3SS), also called injectisome, which is used to inject bacterial effector proteins into eukaryotic host cells. YopB/SctE and YopD/SctB are inserted into the host membrane where they form a pore and allow the translocation of effector proteins into the cytosol of target cells. Is an essential virulence determinant. Required for YopE and YopH translocation. Shows membrane disruptive activity in vitro. In terms of biological role, interaction with the host cell triggers a signaling response, via activation of the small GTPase Ras, the MAPK kinases ERK and JNK and the nuclear factor NF-kappa-B pathways, and production of the proinflammatory cytokine interleukin-8 (IL-8). YopB/SctE-dependent signaling response is counteracted by YopE, YopH and YopJ in infected host cells. YopB/SctE is directly responsible for signaling and its insertion in the membrane is important to activate the signaling response in the host cell. The sequence is that of Type 3 secretion system translocon protein SctE from Yersinia pseudotuberculosis serotype I (strain IP32953).